The following is a 344-amino-acid chain: Protein RecA (344 aa).

65–72 serves as a coordination point for ATP; that stretch reads GPESSGKT. Residues 323-337 are compositionally biased toward basic and acidic residues; the sequence is ELREKFQPAEAPREA. Residues 323–344 form a disordered region; sequence ELREKFQPAEAPREAGDDEDKE.

The protein belongs to the RecA family.

It localises to the cytoplasm. Can catalyze the hydrolysis of ATP in the presence of single-stranded DNA, the ATP-dependent uptake of single-stranded DNA by duplex DNA, and the ATP-dependent hybridization of homologous single-stranded DNAs. It interacts with LexA causing its activation and leading to its autocatalytic cleavage. The chain is Protein RecA from Xanthomonas axonopodis pv. citri (strain 306).